A 91-amino-acid polypeptide reads, in one-letter code: Mercuric transport protein periplasmic component (91 aa).

An N-terminal signal peptide occupies residues 1-19 (MKKLFAALALAAVVAPVWA). One can recognise an HMA domain in the interval 22 to 88 (QTVTLSVPGM…ATGDAGYPSS (67 aa)). Residues C33 and C36 each coordinate Hg(2+).

Belongs to the MerP family. In terms of assembly, monomer.

The protein resides in the periplasm. Functionally, involved in mercury resistance. Acts as a mercury scavenger that specifically binds to a mercuric ion in the periplasm and probably passes it to the cytoplasmic mercuric reductase MerA via the mercuric transport protein MerT. This is Mercuric transport protein periplasmic component (merP) from Alcaligenes sp.